Consider the following 198-residue polypeptide: Peptidyl-tRNA hydrolase (198 aa).

Tyr-17 is a tRNA binding site. Residue His-22 is the Proton acceptor of the active site. TRNA is bound by residues Tyr-74, Asn-76, and Asn-122.

It belongs to the PTH family. As to quaternary structure, monomer.

The protein resides in the cytoplasm. The catalysed reaction is an N-acyl-L-alpha-aminoacyl-tRNA + H2O = an N-acyl-L-amino acid + a tRNA + H(+). Hydrolyzes ribosome-free peptidyl-tRNAs (with 1 or more amino acids incorporated), which drop off the ribosome during protein synthesis, or as a result of ribosome stalling. In terms of biological role, catalyzes the release of premature peptidyl moieties from peptidyl-tRNA molecules trapped in stalled 50S ribosomal subunits, and thus maintains levels of free tRNAs and 50S ribosomes. This Kineococcus radiotolerans (strain ATCC BAA-149 / DSM 14245 / SRS30216) protein is Peptidyl-tRNA hydrolase.